The primary structure comprises 523 residues: Acetyl-CoA hydrolase (523 aa).

Residue 277–281 (GIGNI) participates in CoA binding. Glu302 serves as the catalytic 5-glutamyl coenzyme A thioester intermediate. CoA-binding residues include Asn392 and Gly396.

It belongs to the acetyl-CoA hydrolase/transferase family.

It localises to the cytoplasm. It catalyses the reaction acetyl-CoA + H2O = acetate + CoA + H(+). Presumably involved in regulating the intracellular acetyl-CoA pool for fatty acid and cholesterol synthesis and fatty acid oxidation. The sequence is that of Acetyl-CoA hydrolase (ACH1) from Kluyveromyces lactis (strain ATCC 8585 / CBS 2359 / DSM 70799 / NBRC 1267 / NRRL Y-1140 / WM37) (Yeast).